Consider the following 332-residue polypeptide: RNA polymerase principal sigma factor HrdD (332 aa).

Residues 1–25 form a disordered region; it reads MATRAVARRQSATGETADSASSVRA. Over residues 10 to 22 the composition is skewed to polar residues; that stretch reads QSATGETADSASS. Residues 124-137 carry the Polymerase core binding motif; that stretch reads DLIQEGNAGLVRAV. A DNA-binding region (H-T-H motif) is located at residues 294 to 313; it reads LTEVGKEHGLTRERIRQIEK.

Belongs to the sigma-70 factor family.

Its function is as follows. Sigma factors are initiation factors that promote the attachment of RNA polymerase to specific initiation sites and are then released. This chain is RNA polymerase principal sigma factor HrdD (hrdD), found in Streptomyces viridifaciens.